The primary structure comprises 455 residues: Kynurenine 3-monooxygenase (455 aa).

Belongs to the aromatic-ring hydroxylase family. KMO subfamily. FAD is required as a cofactor.

It carries out the reaction L-kynurenine + NADPH + O2 + H(+) = 3-hydroxy-L-kynurenine + NADP(+) + H2O. The protein operates within cofactor biosynthesis; NAD(+) biosynthesis; quinolinate from L-kynurenine: step 1/3. In terms of biological role, catalyzes the hydroxylation of L-kynurenine (L-Kyn) to form 3-hydroxy-L-kynurenine (L-3OHKyn). Required for synthesis of quinolinic acid. This Xanthomonas oryzae pv. oryzae (strain KACC10331 / KXO85) protein is Kynurenine 3-monooxygenase.